A 298-amino-acid chain; its full sequence is GTP cyclohydrolase FolE2 (298 aa).

The protein belongs to the GTP cyclohydrolase IV family.

It carries out the reaction GTP + H2O = 7,8-dihydroneopterin 3'-triphosphate + formate + H(+). It functions in the pathway cofactor biosynthesis; 7,8-dihydroneopterin triphosphate biosynthesis; 7,8-dihydroneopterin triphosphate from GTP: step 1/1. In terms of biological role, converts GTP to 7,8-dihydroneopterin triphosphate. This Neisseria meningitidis serogroup A / serotype 4A (strain DSM 15465 / Z2491) protein is GTP cyclohydrolase FolE2.